The primary structure comprises 1931 residues: MAQQPPPSRFLGVTDLSSLAVTEDTVLVTLQERYISHKPYTSLSPAALVFLSPYSHLPIDDEESLLHYVEEYYQCNNEEGGSRNEQGWWKKKMEQPHVFQLALSAYYNMRRTGQDQVIIASGPTGSGKSELKRLAIEAITQVSLANPGKKGSKIGLQVSSAEFILKCFGNAHTLSNDEASRFGTYTELQFNERGRLEGLKTIVYYFERSRVSQAPINGERNFHAFYYLVSGAPEEERNFLKLGDVSDYRYLNCRVRRVGVDDRHRYSQLRQAFKLMGISSRLIAQIFQLLASILHIGNLRFSPSDGIQEGASVINVETLDIVAEFLGVHSESLAEIFSLKTVLVRKEVCTTFLGPEQAEQVRDELARTLYSLLFSWINEHINTKLCKDSFGSFIALVDLPGIQRNSGSMGSFNSVDQFCLNFAAEKMHNWVLHRVHETTRQEAETERLLISRVPYFDNSECLGMLSNPRGGLISVIDDLSQKKRSESNLLESLGKRFHNHPSMSISPQGNRSSASFTINHYDGPVTYSTSNFLERNANETSTDIIQLLRGDTTSRSQVSTTEGHGSSNPFIKGLFGMKNIAMQTHPRSDSTIVAAQQSVRPVRAPSTRRKKMMSLVPVSEEGGEETSDFQVGGGNDESYSSKELHCIAGQHWAAVDSLLKSFDQTQTWYIFALRPNDSQLPSQFDLRSMKQQVRSFGLVEMAQQLQTSWEVRLSHKEACERYNEELLYRGIPEGTGDVERLRDLKRLMSLNDADMGIGLQRVFLSHDLFRFLEDRLRAKEPGEQHAYEDLGHRKLQTDPFSPHRYQPTSFDSQDHVYKDPSIRPVDSSANLPLMEHAQPIVNSSLEIEDRESSAAPYVSYGGRSITDIEGYASSRDLLASSIHKSEKDPLDTEPQAGETTEVYRESIARRRWVWLCSILTWWIPGFLLSKIAGMKRQDIRQAWREKLAINMIIWFICGCAIFVIAILGPVICPTQHVYSTNELASHSYTLDPNNAFVAIRGEVFDLSQFAPTHLTAVSVVPTKSIMQYGGLDASELLPVQVSALCGGVSGSISQYVTLDSTNTTDVYSQYHDFRAFTNDSRPDWYAEMMIMMRHRFRVGFMGYTKKDLKKMAAQGKAVAIYDNLVYDMSNYIRQNGGGLKAPDGVNLTAQDQADRQFMSDQVVSLFKYNSGKDITTLLDNLGSTIGTDVVDRQKTCLRNLFILGKLDTRDSAQCQFSTYILLALSCVMVAVIGFKFLSALHFGSVRAPESHDKFVICQVPCYTEGEESLRRTIDSLCKLRYDDKRKLILVICDGNIKGFGNDKPTPAIVLDILGVDVNSDPEPLSFQSLGEGAKQHNMGKVYAGLYECAGHVVPYLVVAKVGKPNERQKPGNRGKRDSQMLVMHFLNKVHFSAPMNPLELEMYHQIKNVIGVNPSFYEYLFMVDADTTVDEMSLNRLVSAMRHDKKIIGVCGETSIANAKQSIVTMSQVYEYFISHHLSKAFESLFGSITCLPGCFSMYRLRSPDTNKPLFISHGIIQDYSENRVDTLHLKNLLHLGEDRYLTTLVLKHFQDYKTKFVRHAYAKTVAPDSIKVLLSQRRRWINSTVHNLAELVFLDQLCGFCCFSMRFVVFIDLLSTIIAPVTVAYIVYLIYLIVHDGSSIPTLSIIMLAAIYGLQAMIFIFRMRWDMIAWMIFYICAIPVFSFLLPLYSFWKMDDFSWGSTRLVVGDKGKKIVIHDEGKFDPSSIPLRSWEEYENELWDQESVHSGSYMPPKAEYSYDYPRTRSTYSHGGYAYGQPIHPMQTRSTSPVSSRYQMSQFRQSPYQSPYQGPYGGSTADFRSSRMDMAHRPSLDDTSSFHQPYQPAPRPQSSYAFNLPDPSSDSFTAPAVDYLGAQAITDSQLERSIRKICANAELDKLTKKGVRKELEREYGVELTERREAINRLVEKVLTE.

One can recognise a Myosin motor domain in the interval 11–777 (LGVTDLSSLA…LFRFLEDRLR (767 aa)). 122–129 (GPTGSGKS) contributes to the ATP binding site. Asparagine 510, asparagine 538, and asparagine 676 each carry an N-linked (GlcNAc...) asparagine glycan. Residues 655–677 (VDSLLKSFDQTQTWYIFALRPND) form an actin-binding region. The tract at residues 798–817 (DPFSPHRYQPTSFDSQDHVY) is disordered. A glycan (N-linked (GlcNAc...) asparagine) is linked at asparagine 842. A run of 2 helical transmembrane segments spans residues 912-932 (WVWL…SKIA) and 951-971 (MIIW…GPVI). Residues asparagine 1062, asparagine 1078, and asparagine 1146 are each glycosylated (N-linked (GlcNAc...) asparagine). A helical membrane pass occupies residues 1220–1240 (ILLALSCVMVAVIGFKFLSAL). Residue asparagine 1583 is glycosylated (N-linked (GlcNAc...) asparagine). 3 helical membrane-spanning segments follow: residues 1615–1635 (LSTI…YLIV), 1641–1661 (IPTL…MIFI), and 1668–1688 (MIAW…LLPL). The interval 1826–1847 (AHRPSLDDTSSFHQPYQPAPRP) is disordered. The 56-residue stretch at 1875-1930 (AITDSQLERSIRKICANAELDKLTKKGVRKELEREYGVELTERREAINRLVEKVLT) folds into the DEK-C domain.

The protein in the N-terminal section; belongs to the TRAFAC class CC myosin-kinesin ATPase superfamily. Myosin family. It in the C-terminal section; belongs to the chitin synthase family. Class V subfamily.

It is found in the cell membrane. It localises to the cell septum. Its subcellular location is the cell tip. It catalyses the reaction [(1-&gt;4)-N-acetyl-beta-D-glucosaminyl](n) + UDP-N-acetyl-alpha-D-glucosamine = [(1-&gt;4)-N-acetyl-beta-D-glucosaminyl](n+1) + UDP + H(+). Functionally, polymerizes chitin, a structural polymer of the cell wall and septum, by transferring the sugar moiety of UDP-GlcNAc to the non-reducing end of the growing chitin polymer. Produces a large proportion of the chitin that is not deacetylated to chitosan. In Cryptococcus neoformans var. grubii serotype A (strain H99 / ATCC 208821 / CBS 10515 / FGSC 9487) (Filobasidiella neoformans var. grubii), this protein is Chitin synthase 5.